A 164-amino-acid chain; its full sequence is UPF0478 protein SSP1024 (164 aa).

The chain crosses the membrane as a helical span at residues 7–27 (IAGIIAAVAFLILVIGIVVVL). The disordered stretch occupies residues 136–164 (RNRRDSANYKTSSVANETNHSYTTRVDNK). Residues 143–164 (NYKTSSVANETNHSYTTRVDNK) show a composition bias toward polar residues.

It belongs to the UPF0478 family.

It is found in the cell membrane. This chain is UPF0478 protein SSP1024, found in Staphylococcus saprophyticus subsp. saprophyticus (strain ATCC 15305 / DSM 20229 / NCIMB 8711 / NCTC 7292 / S-41).